Reading from the N-terminus, the 313-residue chain is MEKIEHSTIATNGINMHVASAGSGPAVLFLHGFPELWYSWRHQLLYLSSLGYRAIAPDLRGFGDTDAPPSPSSYTAHHIVGDLVGLLDQLGVDQVFLVGDWGAMMAWYFCLFRPDRVKALVNLSVHFTPRNPAISPLDGFRLMLGDDFYVCKFQEPGVAEADFGSVDTATMFKKFLTMRDPRPPIIPNGFRSLATPEALPSWLTEEDIDYFAAKFAKTGFTGGFNYYRAIDLTWELTAPWSGSEIKVPTKFIVGDLDLVYHFPGVKEYIHGGGFKKDVPFLEEVVVMEGAAHFINQEKADEINSLIYDFIKQF.

One can recognise an AB hydrolase-1 domain in the interval 25-299; that stretch reads PAVLFLHGFP…AAHFINQEKA (275 aa). Residue Asp-100 is the Nucleophile of the active site. Tyr-149 is a binding site for an epoxide. Residue Tyr-227 is the Proton donor of the active site. The active-site Proton acceptor is His-292.

This sequence belongs to the AB hydrolase superfamily. Epoxide hydrolase family. As to quaternary structure, homodimer. In terms of tissue distribution, highly expressed in fruits 15 days after anthesis (15-DAA).

It carries out the reaction an epoxide + H2O = an ethanediol. The catalysed reaction is (24S)-24,25-epoxycucurbitadienol + H2O = (24R)-24,25-dihydroxycucurbitadienol. It functions in the pathway secondary metabolite biosynthesis; terpenoid biosynthesis. Epoxide hydrolase involved in the biosynthesis of cucurbitacin and mogroside tetracyclic triterpene natural products (e.g. siamenoside I and mogrosides IV, V and VI). Cucurbitacins have cytotoxic properties and exhibit deterrent taste as a defense barrier against herbivores. Mogrosides are nonsugar highly oxygenated compounds used as high-intensity zero-calorie sweeteners; they also possess pharmacological properties such as regulating immunity, lowering blood sugar and lipid levels, protecting the liver, and acting as antioxidants and antitumor agents. Catalyzes the hydrolysis of aromatic epoxide-containing substrates, such as the conversion of 24,25-epoxycucurbitadienol to 24,25-dihydroxycucurbitadienol. The chain is Epoxide hydrolase 1 from Siraitia grosvenorii (Monk's fruit).